The primary structure comprises 266 residues: Glucose 1-dehydrogenase (266 aa).

15-39 (LVTGASQGIGEATALRFAEEGAQVA) lines the NADP(+) pocket. Residue Ser-149 participates in substrate binding. The Proton acceptor role is filled by Tyr-162.

This sequence belongs to the short-chain dehydrogenases/reductases (SDR) family. Homotetramer or homooctamer.

The catalysed reaction is D-glucose + NADP(+) = D-glucono-1,5-lactone + NADPH + H(+). Functionally, oxidizes both D-glucose and D-mannose, but is 15 times more catalytically efficient with mannose. Strictly dependent on NADP. In Gluconobacter oxydans (strain 621H) (Gluconobacter suboxydans), this protein is Glucose 1-dehydrogenase.